The primary structure comprises 1534 residues: ABC transporter G family member 6 (1534 aa).

Residues 1–11 show a composition bias toward basic and acidic residues; sequence MAKQDPKDKNS. Residues 1–85 form a disordered region; it reads MAKQDPKDKN…ESNYDSDDEK (85 aa). The span at 21–65 shows a compositional bias: low complexity; it reads NNNNNENLDNDQELLNNNNNNNNNNNNNNNNNNNNNNNNNNNNNL. Residues 138 to 385 enclose the ABC transporter 1 domain; the sequence is VYCRNATYTV…FKKLGFACPS (248 aa). Position 177–184 (177–184) interacts with ATP; that stretch reads GTPGCGKS. An ABC transmembrane type-2 1 domain is found at 481-757; that stretch reads RRNYYNFLTR…VVCFFALKYF (277 aa). A run of 7 helical transmembrane segments spans residues 486–506, 521–541, 566–586, 592–612, 625–645, 652–672, and 734–754; these read NFLT…TLYW, LLFF…NSFF, IICD…IVYW, PVFI…NLSL, IEIA…FSGF, IGGW…FQGL, and VVFG…FFAL. The tract at residues 781 to 907 is disordered; sequence KQDEESAAIS…KSKNGKDIGS (127 aa). The span at 797–808 shows a compositional bias: acidic residues; the sequence is IDDDNDDDADYE. Positions 830 to 841 are enriched in polar residues; sequence SPSSLTTGSPYY. A compositionally biased stretch (low complexity) spans 842–856; it reads NINNNNNNLSGSGNN. Over residues 864–873 the composition is skewed to polar residues; that stretch reads TPSNLSPSVN. Low complexity predominate over residues 874–896; it reads SPITINSPMPTSPSNNNNNNNSN. Residues 897 to 906 show a composition bias toward basic and acidic residues; that stretch reads EKSKNGKDIG. The ABC transporter 2 domain maps to 924 to 1166; the sequence is VKVDDPDNPK…VILDYCDKLG (243 aa). 960-967 lines the ATP pocket; it reads GPSGAGKS. An ABC transmembrane type-2 2 domain is found at 1256–1529; it reads LRRPAIFVSN…GLSFWGFKKI (274 aa). The next 6 membrane-spanning stretches (helical) occupy residues 1261-1281, 1296-1316, 1345-1365, 1377-1397, 1404-1424, and 1506-1526; these read IFVS…TLFV, LLFF…PTTV, YPFT…IAGL, CLFI…CLAV, MAST…GFVI, and IDIA…FWGF.

This sequence belongs to the ABC transporter superfamily. ABCG family. PDR (TC 3.A.1.205) subfamily.

It is found in the membrane. This Dictyostelium discoideum (Social amoeba) protein is ABC transporter G family member 6 (abcG6).